A 120-amino-acid polypeptide reads, in one-letter code: U-scoloptoxin(20)-Cw1a (120 aa).

The signal sequence occupies residues M1–A26. Residues S87 to I106 form a disordered region. Basic and acidic residues predominate over residues D97 to I106.

This sequence belongs to the scoloptoxin-20 family. Contains 3 disulfide bonds. As to expression, expressed by the venom gland.

It localises to the secreted. The chain is U-scoloptoxin(20)-Cw1a from Cormocephalus westwoodi (Westwood's green centipede).